The sequence spans 474 residues: Histone H2B.v2 (474 aa).

Disordered stretches follow at residues 99-123 (FNNG…QNEL), 276-295 (TTFT…ISGD), and 328-394 (FNDN…VNNN). Composition is skewed to low complexity over residues 100 to 110 (NNGGNNNNNNE), 276 to 286 (TTFTQQEQQEQ), and 329 to 368 (NDNN…NNKN).

This sequence belongs to the histone H2B family.

The polypeptide is Histone H2B.v2 (H2Bv2) (Dictyostelium discoideum (Social amoeba)).